A 204-amino-acid chain; its full sequence is MGAYKYMQELWRKKQSDVMRFLLRVRCWQYRQLSALHRAPRPTRPDKARRLGYKAKQGYVIYRIRVRRGGRKRPVPKGATYGKPVHHGVNQIKFARSLQSVAEERAGRHCGGLRVLSSYWVGEDSTYKFFEVVLVDTFHKAIRRNPDTQWITKAVHKHREMRGLTSAGKKSRGLGKGHKFHLTIGGSRRAAWKRRNTLQLHRYR.

It belongs to the eukaryotic ribosomal protein eL15 family. Component of the large ribosomal subunit.

The protein localises to the cytoplasm. Functionally, component of the large ribosomal subunit. The ribosome is a large ribonucleoprotein complex responsible for the synthesis of proteins in the cell. This is Large ribosomal subunit protein eL15 (rpl15) from Carassius auratus (Goldfish).